Here is a 447-residue protein sequence, read N- to C-terminus: Tubulin beta-2 chain (447 aa).

GTP contacts are provided by Q11, E69, S138, G142, T143, G144, N204, and N226. Residue E69 participates in Mg(2+) binding. The interval 426-447 (QDAGVDEEEEEYEEEAPLEEEV) is disordered. Positions 429 to 447 (GVDEEEEEYEEEAPLEEEV) are enriched in acidic residues.

This sequence belongs to the tubulin family. Dimer of alpha and beta chains. A typical microtubule is a hollow water-filled tube with an outer diameter of 25 nm and an inner diameter of 15 nM. Alpha-beta heterodimers associate head-to-tail to form protofilaments running lengthwise along the microtubule wall with the beta-tubulin subunit facing the microtubule plus end conferring a structural polarity. Microtubules usually have 13 protofilaments but different protofilament numbers can be found in some organisms and specialized cells. It depends on Mg(2+) as a cofactor.

It localises to the cytoplasm. The protein resides in the cytoskeleton. Functionally, tubulin is the major constituent of microtubules, a cylinder consisting of laterally associated linear protofilaments composed of alpha- and beta-tubulin heterodimers. Microtubules grow by the addition of GTP-tubulin dimers to the microtubule end, where a stabilizing cap forms. Below the cap, tubulin dimers are in GDP-bound state, owing to GTPase activity of alpha-tubulin. This chain is Tubulin beta-2 chain (TUB2), found in Colletotrichum gloeosporioides (Anthracnose fungus).